The primary structure comprises 330 residues: Ferredoxin--NADP reductase (330 aa).

The FAD site is built by T19, D38, Q46, Y51, A91, F129, D286, and S327.

It belongs to the ferredoxin--NADP reductase type 2 family. As to quaternary structure, homodimer. FAD is required as a cofactor.

It catalyses the reaction 2 reduced [2Fe-2S]-[ferredoxin] + NADP(+) + H(+) = 2 oxidized [2Fe-2S]-[ferredoxin] + NADPH. The chain is Ferredoxin--NADP reductase from Nocardioides sp. (strain ATCC BAA-499 / JS614).